A 224-amino-acid chain; its full sequence is MTDSRIDFRRAKFLISAPDIAHLDQYLPGDIGVEIAFAGRSNAGKSSALNALTEQKSLARTSKTPGRTQLINVFQLDDDRRLVDLPGYGFAQVPLALKHKWQEALGEYLQKRACLSGVVVLMDIRHPLKDLDMQMIEWAVLSNIPVLALLTKSDKLTQSVKMKTVNDVRAALKEFGDKVQVETLSSLKGTGKPKVLSILNDWCHPEWLAEQKAEQASASELAPE.

Positions 31-205 constitute an EngB-type G domain; it reads IGVEIAFAGR…LSILNDWCHP (175 aa). GTP-binding positions include 39-46, 66-70, 84-87, 151-154, and 184-186; these read GRSNAGKS, GRTQL, DLPG, TKSD, and LSS. Residues Ser46 and Thr68 each contribute to the Mg(2+) site.

The protein belongs to the TRAFAC class TrmE-Era-EngA-EngB-Septin-like GTPase superfamily. EngB GTPase family. Mg(2+) is required as a cofactor.

Functionally, necessary for normal cell division and for the maintenance of normal septation. This chain is Probable GTP-binding protein EngB, found in Shewanella frigidimarina (strain NCIMB 400).